Here is a 350-residue protein sequence, read N- to C-terminus: tRNA uridine(34) hydroxylase (350 aa).

Residues 146-240 form the Rhodanese domain; it reads DDPDALFIDM…YARKAREQGL (95 aa). The active-site Cysteine persulfide intermediate is the cysteine 200.

Belongs to the TrhO family.

It carries out the reaction uridine(34) in tRNA + AH2 + O2 = 5-hydroxyuridine(34) in tRNA + A + H2O. In terms of biological role, catalyzes oxygen-dependent 5-hydroxyuridine (ho5U) modification at position 34 in tRNAs. This is tRNA uridine(34) hydroxylase from Shigella dysenteriae serotype 1 (strain Sd197).